The chain runs to 325 residues: Cytochrome c1, heme protein, mitochondrial (325 aa).

The transit peptide at 1 to 84 (MAAAAASLRR…AVALHSAVSA (84 aa)) directs the protein to the mitochondrion. Topologically, residues 85 to 287 (SDLELHPPSY…SEPEHDHRKR (203 aa)) are mitochondrial intermembrane. The Cytochrome c domain maps to 108-209 (TSIRRGFQVY…IVRARHGGED (102 aa)). C121, C124, H125, and M244 together coordinate heme c. A helical transmembrane segment spans residues 288–308 (MGLKMLLMMGLLLPLTYAMKR). Over 309–325 (HKWSVLKSRKLAYRPPK) the chain is Mitochondrial matrix.

The protein belongs to the cytochrome c family. In terms of assembly, component of the ubiquinol-cytochrome c oxidoreductase (cytochrome b-c1 complex, complex III, CIII), a multisubunit enzyme composed of 11 subunits. The complex is composed of 3 respiratory subunits cytochrome b, cytochrome c1 and Rieske protein UQCRFS1, 2 core protein subunits UQCRC1/QCR1 and UQCRC2/QCR2, and 6 low-molecular weight protein subunits UQCRH/QCR6, UQCRB/QCR7, UQCRQ/QCR8, UQCR10/QCR9, UQCR11/QCR10 and subunit 9, the cleavage product of Rieske protein UQCRFS1. The complex exists as an obligatory dimer and forms supercomplexes (SCs) in the inner mitochondrial membrane with NADH-ubiquinone oxidoreductase (complex I, CI) and cytochrome c oxidase (complex IV, CIV), resulting in different assemblies (supercomplex SCI(1)III(2)IV(1) and megacomplex MCI(2)III(2)IV(2)). Interacts with FLVCR2; this interaction occurs in the absence of heme and is disrupted upon heme binding. The cofactor is heme c.

It localises to the mitochondrion inner membrane. It catalyses the reaction a quinol + 2 Fe(III)-[cytochrome c](out) = a quinone + 2 Fe(II)-[cytochrome c](out) + 2 H(+)(out). In terms of biological role, component of the ubiquinol-cytochrome c oxidoreductase, a multisubunit transmembrane complex that is part of the mitochondrial electron transport chain which drives oxidative phosphorylation. The respiratory chain contains 3 multisubunit complexes succinate dehydrogenase (complex II, CII), ubiquinol-cytochrome c oxidoreductase (cytochrome b-c1 complex, complex III, CIII) and cytochrome c oxidase (complex IV, CIV), that cooperate to transfer electrons derived from NADH and succinate to molecular oxygen, creating an electrochemical gradient over the inner membrane that drives transmembrane transport and the ATP synthase. The cytochrome b-c1 complex catalyzes electron transfer from ubiquinol to cytochrome c, linking this redox reaction to translocation of protons across the mitochondrial inner membrane, with protons being carried across the membrane as hydrogens on the quinol. In the process called Q cycle, 2 protons are consumed from the matrix, 4 protons are released into the intermembrane space and 2 electrons are passed to cytochrome c. Cytochrome c1 is a catalytic core subunit containing a c-type heme. It transfers electrons from the [2Fe-2S] iron-sulfur cluster of the Rieske protein to cytochrome c. This Mus musculus (Mouse) protein is Cytochrome c1, heme protein, mitochondrial (Cyc1).